The primary structure comprises 444 residues: Deoxyguanosinetriphosphate triphosphohydrolase-like protein (444 aa).

One can recognise an HD domain in the interval 59–250 (RLTHSLEVSQ…MELADDIAYA (192 aa)).

The protein belongs to the dGTPase family. Type 2 subfamily.

This is Deoxyguanosinetriphosphate triphosphohydrolase-like protein from Shewanella halifaxensis (strain HAW-EB4).